The primary structure comprises 327 residues: MRVLGIETSCDETAVAVLDNGKNVVVNFTVSQIEIHQKFGGVVPEVAARHHLKNLPILLKKAFEKVPPETVDVVAATYGPGLIGALLVGLSAAKGLAISLEKPFVGVNHVEAHVQAVFLANPDLKPPLVVLMVSGGHTQLMKVNEDYSMEVLGETLDDSAGEAFDKVARLLGLGYPGGPVIDRVAKKGDPEKYSFPRPMLDDDSYNFSFAGLKTSVLYFLQREKDYKVEDVAASFQKAVVDILVEKTFRLARNLGIRKIAFVGGVAANSMLREEVRKRAERWNYEVFFPPLELCTDNALMVAKAGYEKAKRGMFSPLNLNADPNLNV.

Fe cation contacts are provided by H109 and H113. Substrate contacts are provided by residues M132–G136, D165, G178, D182, and N268. Fe cation is bound at residue D296.

It belongs to the KAE1 / TsaD family. It depends on Fe(2+) as a cofactor.

Its subcellular location is the cytoplasm. It carries out the reaction L-threonylcarbamoyladenylate + adenosine(37) in tRNA = N(6)-L-threonylcarbamoyladenosine(37) in tRNA + AMP + H(+). Required for the formation of a threonylcarbamoyl group on adenosine at position 37 (t(6)A37) in tRNAs that read codons beginning with adenine. Is involved in the transfer of the threonylcarbamoyl moiety of threonylcarbamoyl-AMP (TC-AMP) to the N6 group of A37, together with TsaE and TsaB. TsaD likely plays a direct catalytic role in this reaction. This chain is tRNA N6-adenosine threonylcarbamoyltransferase, found in Thermotoga petrophila (strain ATCC BAA-488 / DSM 13995 / JCM 10881 / RKU-1).